Reading from the N-terminus, the 271-residue chain is PA-phosphatase related-family protein DDB_G0284367 (271 aa).

Transmembrane regions (helical) follow at residues 23 to 43 (FLCL…IPPF), 68 to 88 (IVPV…VFIG), 102 to 122 (AALG…ILKV), 150 to 170 (FPSG…FYLC), 181 to 201 (GNIL…LVAV), and 211 to 231 (FSDI…VYFM).

This sequence belongs to the PA-phosphatase related phosphoesterase family.

Its subcellular location is the membrane. The sequence is that of PA-phosphatase related-family protein DDB_G0284367 from Dictyostelium discoideum (Social amoeba).